We begin with the raw amino-acid sequence, 328 residues long: Arabinose 5-phosphate isomerase KdsD (328 aa).

The region spanning 41–184 (ACEAIFRCHG…AVALLKARGF (144 aa)) is the SIS domain. Residues 75-76 (GT), His82, His88, 114-123 (TLIPVLKRQK), and 148-150 (NVP) each bind substrate. His82 contacts Zn(2+). One can recognise a CBS 1 domain in the interval 210–268 (MHTGTEIPTVSPDASLRDALLEITRKSLGLTVICDDSMRIKGIFTDGDLRRVFDMGIDL). Position 275 (Asp275) interacts with substrate. Residues 277 to 328 (MTRGGIRVPPNILAVDALNLMESRHITALLVADGDQLLGVVHMHDMLRAGVV) enclose the CBS 2 domain.

This sequence belongs to the SIS family. GutQ/KpsF subfamily. As to quaternary structure, homotetramer.

It carries out the reaction D-arabinose 5-phosphate = D-ribulose 5-phosphate. It participates in carbohydrate biosynthesis; 3-deoxy-D-manno-octulosonate biosynthesis; 3-deoxy-D-manno-octulosonate from D-ribulose 5-phosphate: step 1/3. It functions in the pathway bacterial outer membrane biogenesis; lipopolysaccharide biosynthesis. Functionally, involved in the biosynthesis of 3-deoxy-D-manno-octulosonate (KDO), a unique 8-carbon sugar component of lipopolysaccharides (LPSs). Catalyzes the reversible aldol-ketol isomerization between D-ribulose 5-phosphate (Ru5P) and D-arabinose 5-phosphate (A5P). The sequence is that of Arabinose 5-phosphate isomerase KdsD (kdsD) from Yersinia pestis.